A 512-amino-acid chain; its full sequence is MALAKTIMIQGTSSHVGKSLLCTALCRIFKQDGFHVAPFKAQNMALNSYVTLTGGEIGRAQGAQAEAAGIAATVTMNPVLIKPKQDLNAQVVVLGKPLADMSARDYRANFLPKAVNLVGQCIEELRREFQVLVIEGAGSPAEINLKDRDIVNMRTAILADAPVILVADIDRGGVFASLVGTLELLEPHERQRVAGFIINKFRGDIELLKPGLEFLEQRTGKPVLGVIPYLHEHGIEQEDSVALEGNKNVSSGSEIDIAVVKLPRISNFTDFDLIGRVPGICLRFVCPGDPMGTPEAVILPGTKNTIEDLQYLKEKGTDQEIIELARKGIPVVGICGGYQMLGKMLYDPWGTEASLESITGLGLLDIETTFFKEKQTHRCKAKITCTELNWCGITNQEITGYEIHTGQVKLGREAKPLLQITQRSGNIVALPDGAVGNQGHIWGTHLHGLFDNKALLLSWVNSLRERKGLSRLTLAKLPDNREEKYDNLAEAVRHHLNMKQLHQMMGLGEGKP.

A GATase cobBQ-type domain is found at 254–455; that stretch reads EIDIAVVKLP…LHGLFDNKAL (202 aa). The active-site Nucleophile is Cys-335. His-447 is an active-site residue.

It belongs to the CobB/CobQ family. CobQ subfamily.

The protein operates within cofactor biosynthesis; adenosylcobalamin biosynthesis. Catalyzes amidations at positions B, D, E, and G on adenosylcobyrinic A,C-diamide. NH(2) groups are provided by glutamine, and one molecule of ATP is hydrogenolyzed for each amidation. In Desulforamulus reducens (strain ATCC BAA-1160 / DSM 100696 / MI-1) (Desulfotomaculum reducens), this protein is Cobyric acid synthase.